A 191-amino-acid polypeptide reads, in one-letter code: HTH-type transcriptional regulator SAR0097 (191 aa).

The 63-residue stretch at A12 to M74 folds into the HTH tetR-type domain. A DNA-binding region (H-T-H motif) is located at residues K37 to F56.

The polypeptide is HTH-type transcriptional regulator SAR0097 (Staphylococcus aureus (strain MRSA252)).